The sequence spans 254 residues: 5-oxoprolinase subunit A (254 aa).

Belongs to the LamB/PxpA family. As to quaternary structure, forms a complex composed of PxpA, PxpB and PxpC.

It catalyses the reaction 5-oxo-L-proline + ATP + 2 H2O = L-glutamate + ADP + phosphate + H(+). Its function is as follows. Catalyzes the cleavage of 5-oxoproline to form L-glutamate coupled to the hydrolysis of ATP to ADP and inorganic phosphate. This Burkholderia vietnamiensis (strain G4 / LMG 22486) (Burkholderia cepacia (strain R1808)) protein is 5-oxoprolinase subunit A.